The chain runs to 70 residues: Large ribosomal subunit protein bL32 (70 aa).

The segment covering 1-19 (MAVPKRKTTPSRRGMRRSH) has biased composition (basic residues). A disordered region spans residues 1–21 (MAVPKRKTTPSRRGMRRSHQA).

Belongs to the bacterial ribosomal protein bL32 family.

The polypeptide is Large ribosomal subunit protein bL32 (Gluconobacter oxydans (strain 621H) (Gluconobacter suboxydans)).